The sequence spans 147 residues: Cytochrome c' (147 aa).

The N-terminal stretch at 1-21 (MKRMMIVAALAALTTTTVAQA) is a signal peptide. Residues Arg-31, Thr-87, Glu-88, Cys-137, Cys-140, and His-141 each contribute to the heme c site.

Homodimer. Post-translationally, binds 1 heme c group covalently per subunit.

Functionally, cytochrome c' is the most widely occurring bacterial c-type cytochrome. Cytochromes c' are high-spin proteins and the heme has no sixth ligand. Their exact function is not known. In Rhodospirillum rubrum (strain ATCC 11170 / ATH 1.1.1 / DSM 467 / LMG 4362 / NCIMB 8255 / S1), this protein is Cytochrome c'.